The primary structure comprises 511 residues: Exodeoxyribonuclease 7 large subunit (511 aa).

Belongs to the XseA family. Heterooligomer composed of large and small subunits.

The protein resides in the cytoplasm. It catalyses the reaction Exonucleolytic cleavage in either 5'- to 3'- or 3'- to 5'-direction to yield nucleoside 5'-phosphates.. Its function is as follows. Bidirectionally degrades single-stranded DNA into large acid-insoluble oligonucleotides, which are then degraded further into small acid-soluble oligonucleotides. The chain is Exodeoxyribonuclease 7 large subunit from Brucella melitensis biotype 2 (strain ATCC 23457).